A 582-amino-acid polypeptide reads, in one-letter code: Probable DNA ligase (582 aa).

An ATP-binding site is contributed by glutamate 248. The active-site N6-AMP-lysine intermediate is lysine 250. Residues arginine 255, arginine 270, glutamate 299, phenylalanine 339, arginine 416, and lysine 422 each contribute to the ATP site.

This sequence belongs to the ATP-dependent DNA ligase family. It depends on Mg(2+) as a cofactor.

The enzyme catalyses ATP + (deoxyribonucleotide)n-3'-hydroxyl + 5'-phospho-(deoxyribonucleotide)m = (deoxyribonucleotide)n+m + AMP + diphosphate.. Functionally, DNA ligase that seals nicks in double-stranded DNA during DNA replication, DNA recombination and DNA repair. This Persephonella marina (strain DSM 14350 / EX-H1) protein is Probable DNA ligase.